A 556-amino-acid chain; its full sequence is Arginine--tRNA ligase (556 aa).

The short motif at 129-139 (ANPTGPLHVGH) is the 'HIGH' region element.

The protein belongs to the class-I aminoacyl-tRNA synthetase family. As to quaternary structure, monomer.

The protein localises to the cytoplasm. The enzyme catalyses tRNA(Arg) + L-arginine + ATP = L-arginyl-tRNA(Arg) + AMP + diphosphate. In Desulfosudis oleivorans (strain DSM 6200 / JCM 39069 / Hxd3) (Desulfococcus oleovorans), this protein is Arginine--tRNA ligase.